The chain runs to 529 residues: Zinc finger protein 490 (529 aa).

A disordered region spans residues 1–53 (MRRNSSLSFQMERPLEEQVQSKWSSSQGRTGTGGSDVLQMQNSEHHGQSIKTQ). Positions 57–132 (ISLEDVAVNF…ALCENKEDCP (76 aa)) constitute a KRAB domain. 13 consecutive C2H2-type zinc fingers follow at residues 156-178 (CDCSVCGEVFMHQVSLNRHMRSH), 194-216 (HKCKECGKTFTRSSSIRTHERIH), 222-244 (YECKECGKAFAFLFSFRNHIRIH), 250-272 (YECKECGKAFRYLTALRRHEKNH), 278-300 (YKCKQCGKAFIYYQPFLTHERTH), 306-328 (YECKQCGKAFSCPTYLRSHEKTH), 334-356 (FVCRECGRAFFSHSSLRKHVKTH), 362-384 (YTCKKCGEAFKSSSSCEVHERTH), 390-412 (YECKQCGKAFNSSSYLQLHERVH), 418-440 (YECKECGKAFLYSTHFRIHERTH), 446-468 (YECKQCGRVFIYFSHLRRHERSH), 474-496 (CECKQCGKAFTCLNSLKVHKRIH), and 502-524 (FQCRQCGKAFSYSKSLHVHERTH).

It belongs to the krueppel C2H2-type zinc-finger protein family.

It localises to the nucleus. May be involved in transcriptional regulation. The chain is Zinc finger protein 490 (ZNF490) from Homo sapiens (Human).